The chain runs to 754 residues: Phosphatidylinositol 4-phosphate 5-kinase 7 (754 aa).

MORN repeat units follow at residues 16 to 38, 39 to 61, 62 to 84, 85 to 107, 108 to 130, 131 to 153, 154 to 176, and 177 to 198; these read YSGE…DGTI, YEGD…SGAK, YEGD…DESV, YSGA…NSDL, YDGL…NGNR, YIGN…NGDL, YDGF…DGCL, and YYGT…AGTK. Residues 329–750 enclose the PIPK domain; the sequence is GEHNYYLMLN…RFVNFLHKVF (422 aa). An activation loop region spans residues 710 to 731; the sequence is YNTKKKVEHTCKSLQYDPMTIS.

The catalysed reaction is a 1,2-diacyl-sn-glycero-3-phospho-(1D-myo-inositol 4-phosphate) + ATP = a 1,2-diacyl-sn-glycero-3-phospho-(1D-myo-inositol-4,5-bisphosphate) + ADP + H(+). This is Phosphatidylinositol 4-phosphate 5-kinase 7 (PIP5K7) from Arabidopsis thaliana (Mouse-ear cress).